Reading from the N-terminus, the 435-residue chain is Trigger factor (435 aa).

A PPIase FKBP-type domain is found at Gly163–Pro248.

This sequence belongs to the FKBP-type PPIase family. Tig subfamily.

Its subcellular location is the cytoplasm. It carries out the reaction [protein]-peptidylproline (omega=180) = [protein]-peptidylproline (omega=0). Involved in protein export. Acts as a chaperone by maintaining the newly synthesized protein in an open conformation. Functions as a peptidyl-prolyl cis-trans isomerase. The chain is Trigger factor from Geotalea daltonii (strain DSM 22248 / JCM 15807 / FRC-32) (Geobacter daltonii).